The primary structure comprises 528 residues: Na(+)/H(+) antiporter NhaB (528 aa).

11 consecutive transmembrane segments (helical) span residues 23-43, 45-65, 90-110, 136-156, 204-224, 242-262, 305-325, 350-370, 392-412, 450-470, and 479-499; these read VAIIAFLIINPIVFFLIDPFV, GWLLVAEFIFTLAMALKCYPL, LVANIEVLLLLVFMVAGIYFM, CFAAAFLSAFLDALTVIAVVI, LLMHAGVGTALGGVTTMVGEP, IRMAPVTLPVFFCGLITCAIV, GLIAVWLIAALALHLAAVGLI, EEALPFTALLAVFFAVVAVII, LALFYVANGLLSMVSDNVFVG, ATPNGQAAFLFLLTSALAPLI, and IMALPYTIVLAIVGLMGIMFF.

The protein belongs to the NhaB Na(+)/H(+) (TC 2.A.34) antiporter family.

The protein resides in the cell inner membrane. It catalyses the reaction 2 Na(+)(in) + 3 H(+)(out) = 2 Na(+)(out) + 3 H(+)(in). Na(+)/H(+) antiporter that extrudes sodium in exchange for external protons. This chain is Na(+)/H(+) antiporter NhaB, found in Vibrio campbellii (strain ATCC BAA-1116).